Here is a 190-residue protein sequence, read N- to C-terminus: B3 domain-containing protein At4g01580 (190 aa).

The disordered stretch occupies residues 1 to 25 (MVITRNMKARATSVSHRQSQQDPES). A compositionally biased stretch (polar residues) spans 12-23 (TSVSHRQSQQDP). Positions 29–122 (KFFKLVLPST…SFRVIIFNAS (94 aa)) form a DNA-binding region, TF-B3.

It is found in the nucleus. This Arabidopsis thaliana (Mouse-ear cress) protein is B3 domain-containing protein At4g01580.